Consider the following 560-residue polypeptide: uncharacterized protein (560 aa).

Positions 18 to 44 form a DNA-binding region, zn(2)-C6 fungal-type; the sequence is CLRCRRRKVKCDRQYPCSRCKESEESC. Residues 60 to 80 form a disordered region; sequence LSRPITRETDSSAHQETRTRL. Residues 64–80 are compositionally biased toward basic and acidic residues; the sequence is ITRETDSSAHQETRTRL. Residues 182-202 traverse the membrane as a helical segment; that stretch reads FATSIILIVTAIAVALSLESF.

The protein localises to the nucleus membrane. This is an uncharacterized protein from Schizosaccharomyces pombe (strain 972 / ATCC 24843) (Fission yeast).